The chain runs to 325 residues: NADH-quinone oxidoreductase subunit H (325 aa).

Helical transmembrane passes span 11–31, 81–101, 114–134, 154–174, 186–206, 237–257, 265–285, and 304–324; these read ILLT…CGAF, VIFT…FAIV, IGIL…LFAG, LSYE…AGSF, VWNV…GVAV, FFVG…TLFF, LPPF…FILI, and ICLP…LWQA.

Belongs to the complex I subunit 1 family. NDH-1 is composed of 13 different subunits. Subunits NuoA, H, J, K, L, M, N constitute the membrane sector of the complex.

Its subcellular location is the cell inner membrane. The enzyme catalyses a quinone + NADH + 5 H(+)(in) = a quinol + NAD(+) + 4 H(+)(out). Its function is as follows. NDH-1 shuttles electrons from NADH, via FMN and iron-sulfur (Fe-S) centers, to quinones in the respiratory chain. The immediate electron acceptor for the enzyme in this species is believed to be ubiquinone. Couples the redox reaction to proton translocation (for every two electrons transferred, four hydrogen ions are translocated across the cytoplasmic membrane), and thus conserves the redox energy in a proton gradient. This subunit may bind ubiquinone. The polypeptide is NADH-quinone oxidoreductase subunit H (Escherichia coli O139:H28 (strain E24377A / ETEC)).